Consider the following 368-residue polypeptide: Glutaminyl-peptide cyclotransferase (368 aa).

Residues 1 to 23 (MAGERRDSKAAAFFCLAWALCLA) form the signal peptide. Asparagine 53 carries N-linked (GlcNAc...) asparagine glycosylation. Cysteines 143 and 169 form a disulfide. Aspartate 164 serves as a coordination point for Zn(2+). Residue glutamate 207 is the Proton acceptor of the active site. Zn(2+) is bound at residue glutamate 208. Catalysis depends on aspartate 254, which acts as the Proton acceptor. Residue asparagine 292 is glycosylated (N-linked (GlcNAc...) asparagine). Histidine 336 lines the Zn(2+) pocket. The N-linked (GlcNAc...) asparagine glycan is linked to asparagine 352.

This sequence belongs to the glutaminyl-peptide cyclotransferase family. In terms of tissue distribution, expressed by the venom gland.

Its subcellular location is the secreted. It catalyses the reaction N-terminal L-glutaminyl-[peptide] = N-terminal 5-oxo-L-prolyl-[peptide] + NH4(+). Responsible for the biosynthesis of pyroglutamyl peptides. Has a bias against acidic and tryptophan residues adjacent to the N-terminal glutaminyl residue and a lack of importance of chain length after the second residue. Also catalyzes N-terminal pyroglutamate formation. The sequence is that of Glutaminyl-peptide cyclotransferase (QPCT) from Boiga irregularis (Brown tree snake).